Consider the following 271-residue polypeptide: ATP synthase subunit delta (271 aa).

The protein belongs to the ATPase delta chain family. In terms of assembly, F-type ATPases have 2 components, F(1) - the catalytic core - and F(0) - the membrane proton channel. F(1) has five subunits: alpha(3), beta(3), gamma(1), delta(1), epsilon(1). F(0) has three main subunits: a(1), b(2) and c(10-14). The alpha and beta chains form an alternating ring which encloses part of the gamma chain. F(1) is attached to F(0) by a central stalk formed by the gamma and epsilon chains, while a peripheral stalk is formed by the delta and b chains.

Its subcellular location is the cell membrane. Its function is as follows. F(1)F(0) ATP synthase produces ATP from ADP in the presence of a proton or sodium gradient. F-type ATPases consist of two structural domains, F(1) containing the extramembraneous catalytic core and F(0) containing the membrane proton channel, linked together by a central stalk and a peripheral stalk. During catalysis, ATP synthesis in the catalytic domain of F(1) is coupled via a rotary mechanism of the central stalk subunits to proton translocation. This protein is part of the stalk that links CF(0) to CF(1). It either transmits conformational changes from CF(0) to CF(1) or is implicated in proton conduction. This Corynebacterium kroppenstedtii (strain DSM 44385 / JCM 11950 / CIP 105744 / CCUG 35717) protein is ATP synthase subunit delta.